Consider the following 406-residue polypeptide: Angiopoietin-related protein 4 (406 aa).

Residues 1–25 (MSGAPTAGAALMLCAATAVLLSAQG) form the signal peptide. Residues 100-143 (EVLHSLQTQLKAQNSRIQQLFHKVAQQQRHLEKQHLRIQHLQSQ) adopt a coiled-coil conformation. Asn177 carries N-linked (GlcNAc...) asparagine glycosylation. The region spanning 179 to 401 (SRLHRLPRDC…ATTMLIQPMA (223 aa)) is the Fibrinogen C-terminal domain. Intrachain disulfides connect Cys188/Cys216 and Cys341/Cys354.

In terms of assembly, homooligomer; disulfide-linked via Cys residues in the N-terminal part of the protein. The homooligomer undergoes proteolytic processing to release the ANGPTL4 C-terminal chain, which circulates as a monomer. The homooligomer unprocessed form is able to interact with the extracellular matrix. N-glycosylated. Post-translationally, forms disulfide-linked dimers and tetramers. In terms of processing, cleaved into a smaller N-terminal chain and a larger chain that contains the fibrinogen C-terminal domain; both cleaved and uncleaved forms are detected in the extracellular space. The cleaved form is not present within the cell. In terms of tissue distribution, detected in blood plasma (at protein level). Detected in liver. Detected in white fat tissue and placenta. Expressed at high levels in the placenta, heart, liver, muscle, pancreas and lung but expressed poorly in the brain and kidney.

It localises to the secreted. It is found in the extracellular space. The protein localises to the extracellular matrix. Functionally, mediates inactivation of the lipoprotein lipase LPL, and thereby plays a role in the regulation of triglyceride clearance from the blood serum and in lipid metabolism. May also play a role in regulating glucose homeostasis and insulin sensitivity. Inhibits proliferation, migration, and tubule formation of endothelial cells and reduces vascular leakage. Upon heterologous expression, inhibits the adhesion of endothelial cell to the extracellular matrix (ECM), and inhibits the reorganization of the actin cytoskeleton, formation of actin stress fibers and focal adhesions in endothelial cells that have adhered to ANGPTL4-containing ECM (in vitro). Depending on context, may modulate tumor-related angiogenesis. Its function is as follows. Mediates inactivation of the lipoprotein lipase LPL, and thereby plays an important role in the regulation of triglyceride clearance from the blood serum and in lipid metabolism. Has higher activity in LPL inactivation than the uncleaved protein. This Homo sapiens (Human) protein is Angiopoietin-related protein 4 (ANGPTL4).